The following is a 185-amino-acid chain: Cytidylate kinase (185 aa).

8 to 16 provides a ligand contact to ATP; the sequence is GPPGSGKTT.

The protein belongs to the cytidylate kinase family. Type 2 subfamily.

It localises to the cytoplasm. The catalysed reaction is CMP + ATP = CDP + ADP. It carries out the reaction dCMP + ATP = dCDP + ADP. This chain is Cytidylate kinase, found in Desulfurococcus amylolyticus (strain DSM 18924 / JCM 16383 / VKM B-2413 / 1221n) (Desulfurococcus kamchatkensis).